The sequence spans 360 residues: Teichoic acids export ATP-binding protein TagH (360 aa).

An ABC transporter domain is found at 24–245 (LKAMFFPKTR…YEDYINWFNK (222 aa)). 59–66 (GINGSGKS) contributes to the ATP binding site. A unknown region spans residues 246–360 (LSKEEKEAHK…GDIDNSDVSL (115 aa)). The segment at 270-290 (EEQENGKAGSGGDGTQPIVQP) is disordered.

This sequence belongs to the ABC transporter superfamily. Teichoic acids exporter (TC 3.A.1.104.1) family. The complex is composed of two ATP-binding proteins (TagH) and two transmembrane proteins (TagG).

The protein resides in the cell membrane. It carries out the reaction ATP + H2O + teichoic acidSide 1 = ADP + phosphate + teichoic acidSide 2.. In terms of biological role, part of the ABC transporter complex TagGH involved in teichoic acids export. Responsible for energy coupling to the transport system. The polypeptide is Teichoic acids export ATP-binding protein TagH (Shouchella clausii (strain KSM-K16) (Alkalihalobacillus clausii)).